The primary structure comprises 212 residues: FMN-dependent NADH:quinone oxidoreductase (212 aa).

FMN-binding positions include Ser-10 and 17-19 (SFS).

The protein belongs to the azoreductase type 1 family. As to quaternary structure, homodimer. It depends on FMN as a cofactor.

The enzyme catalyses 2 a quinone + NADH + H(+) = 2 a 1,4-benzosemiquinone + NAD(+). It carries out the reaction N,N-dimethyl-1,4-phenylenediamine + anthranilate + 2 NAD(+) = 2-(4-dimethylaminophenyl)diazenylbenzoate + 2 NADH + 2 H(+). In terms of biological role, quinone reductase that provides resistance to thiol-specific stress caused by electrophilic quinones. Its function is as follows. Also exhibits azoreductase activity. Catalyzes the reductive cleavage of the azo bond in aromatic azo compounds to the corresponding amines. The protein is FMN-dependent NADH:quinone oxidoreductase of Malacoplasma penetrans (strain HF-2) (Mycoplasma penetrans).